Consider the following 145-residue polypeptide: Copper transporter 6 (145 aa).

A run of 2 helical transmembrane segments spans residues 47-67 (LGMYVLCLIVVFLLAVIVEWL) and 99-119 (YLVMLAVMSFNGGVFIVAIAG).

The protein belongs to the copper transporter (Ctr) (TC 1.A.56) family. SLC31A subfamily.

It localises to the membrane. In terms of biological role, involved in the transport of copper. The protein is Copper transporter 6 (COPT6) of Arabidopsis thaliana (Mouse-ear cress).